Here is a 301-residue protein sequence, read N- to C-terminus: Olfactory receptor 10AG1 (301 aa).

The Extracellular portion of the chain corresponds to 1-16 (MEFVLLGFSDIPNLHW). The chain crosses the membrane as a helical span at residues 17–37 (MLFSIFLLMYLMILMCNGIII). The Cytoplasmic segment spans residues 38–45 (LLIKIHPA). Residues 46-66 (LQTPMYFFLSNFSLLEICYVT) traverse the membrane as a helical segment. Topologically, residues 67–90 (IIIPRMLMDIWTQKGNISLFACAT) are extracellular. Asn82 carries N-linked (GlcNAc...) asparagine glycosylation. The cysteines at positions 88 and 180 are disulfide-linked. Residues 91-111 (QMCFFLMLGGTECLLLTVMAY) traverse the membrane as a helical segment. Residues 112–130 (DRYVAICKPLQYPLVMNHK) lie on the Cytoplasmic side of the membrane. Residues 131–151 (VCIQLIIASWTITIPVVIGET) form a helical membrane-spanning segment. At 152-188 (CQIFLLPFCGTNTINHFFCDIPPILKLACGNIFVNEI) the chain is on the extracellular side. The chain crosses the membrane as a helical span at residues 189-208 (TVHVVAVVFITVPFLLIVVS). The Cytoplasmic portion of the chain corresponds to 209–228 (YGKIISNILKLSSARGKAKA). The helical transmembrane segment at 229–249 (FSTCSSHLIVVILFFGAGTIT) threads the bilayer. Topologically, residues 250 to 262 (YLQPKPHQFQRMG) are extracellular. The chain crosses the membrane as a helical span at residues 263–283 (KLISLFYTILIPTLNPIIYTL). The Cytoplasmic segment spans residues 284-301 (RNKDIMVALRKLLAKLLT).

This sequence belongs to the G-protein coupled receptor 1 family.

Its subcellular location is the cell membrane. Functionally, odorant receptor. This is Olfactory receptor 10AG1 (OR10AG1) from Homo sapiens (Human).